Here is a 443-residue protein sequence, read N- to C-terminus: Adenylyltransferase and sulfurtransferase UBA4 (443 aa).

ATP contacts are provided by residues Gly-81, Asp-102, Ser-109–Arg-113, Lys-126, and Asp-170–Ser-171. Zn(2+) is bound by residues Cys-212 and Cys-215. Cys-229 functions as the Glycyl thioester intermediate; for adenylyltransferase activity in the catalytic mechanism. Residues Cys-290 and Cys-293 each contribute to the Zn(2+) site. The 100-residue stretch at Lys-342–Pro-441 folds into the Rhodanese domain. Cys-400 serves as the catalytic Cysteine persulfide intermediate; for sulfurtransferase activity.

In the N-terminal section; belongs to the HesA/MoeB/ThiF family. UBA4 subfamily. It depends on Zn(2+) as a cofactor.

The protein localises to the cytoplasm. It is found in the cytosol. Its pathway is tRNA modification; 5-methoxycarbonylmethyl-2-thiouridine-tRNA biosynthesis. Functionally, plays a central role in 2-thiolation of mcm(5)S(2)U at tRNA wobble positions of cytosolic tRNA(Lys), tRNA(Glu) and tRNA(Gln). Acts by mediating the C-terminal thiocarboxylation of sulfur carrier URM1. Its N-terminus first activates URM1 as acyl-adenylate (-COAMP), then the persulfide sulfur on the catalytic cysteine is transferred to URM1 to form thiocarboxylation (-COSH) of its C-terminus. The reaction probably involves hydrogen sulfide that is generated from the persulfide intermediate and that acts as a nucleophile towards URM1. Subsequently, a transient disulfide bond is formed. Does not use thiosulfate as sulfur donor; NFS1 probably acting as a sulfur donor for thiocarboxylation reactions. Prior mcm(5) tRNA modification by the elongator complex is required for 2-thiolation. May also be involved in protein urmylation. The sequence is that of Adenylyltransferase and sulfurtransferase UBA4 from Eremothecium gossypii (strain ATCC 10895 / CBS 109.51 / FGSC 9923 / NRRL Y-1056) (Yeast).